Consider the following 423-residue polypeptide: Histidine--tRNA ligase (423 aa).

Belongs to the class-II aminoacyl-tRNA synthetase family. In terms of assembly, homodimer.

The protein localises to the cytoplasm. It catalyses the reaction tRNA(His) + L-histidine + ATP = L-histidyl-tRNA(His) + AMP + diphosphate + H(+). This is Histidine--tRNA ligase from Shewanella loihica (strain ATCC BAA-1088 / PV-4).